We begin with the raw amino-acid sequence, 390 residues long: F-box/kelch-repeat protein At3g04660 (390 aa).

In terms of domain architecture, F-box spans 18-67 (YDPSSILPLELKIEILMKSPPKSIAKLGFVSNHWSSIIRGQVFTDLYMRR). Kelch repeat units follow at residues 115-161 (FSPP…FGYD) and 272-323 (MVDH…DQRV).

In terms of assembly, part of a SCF (ASK-cullin-F-box) protein ligase complex. Interacts with SKP1A/ASK1, SKP1B/ASK2, ASK11 and ASK13.

Its subcellular location is the nucleus. The protein operates within protein modification; protein ubiquitination. Its function is as follows. Component of SCF(ASK-cullin-F-box) E3 ubiquitin ligase complexes, which may mediate the ubiquitination and subsequent proteasomal degradation of target proteins. This chain is F-box/kelch-repeat protein At3g04660, found in Arabidopsis thaliana (Mouse-ear cress).